Reading from the N-terminus, the 468-residue chain is 3-isopropylmalate dehydratase large subunit (468 aa).

Positions 347, 407, and 410 each coordinate [4Fe-4S] cluster.

This sequence belongs to the aconitase/IPM isomerase family. LeuC type 1 subfamily. Heterodimer of LeuC and LeuD. Requires [4Fe-4S] cluster as cofactor.

The catalysed reaction is (2R,3S)-3-isopropylmalate = (2S)-2-isopropylmalate. It functions in the pathway amino-acid biosynthesis; L-leucine biosynthesis; L-leucine from 3-methyl-2-oxobutanoate: step 2/4. Functionally, catalyzes the isomerization between 2-isopropylmalate and 3-isopropylmalate, via the formation of 2-isopropylmaleate. The polypeptide is 3-isopropylmalate dehydratase large subunit (Synechococcus sp. (strain CC9311)).